A 682-amino-acid chain; its full sequence is DNA-directed RNA polymerase subunit beta' (682 aa).

Cys69, Cys71, Cys87, and Cys90 together coordinate Zn(2+). Asp489, Asp491, and Asp493 together coordinate Mg(2+).

The protein belongs to the RNA polymerase beta' chain family. RpoC1 subfamily. In terms of assembly, in plastids the minimal PEP RNA polymerase catalytic core is composed of four subunits: alpha, beta, beta', and beta''. When a (nuclear-encoded) sigma factor is associated with the core the holoenzyme is formed, which can initiate transcription. Requires Mg(2+) as cofactor. It depends on Zn(2+) as a cofactor.

Its subcellular location is the plastid. It is found in the chloroplast. It catalyses the reaction RNA(n) + a ribonucleoside 5'-triphosphate = RNA(n+1) + diphosphate. DNA-dependent RNA polymerase catalyzes the transcription of DNA into RNA using the four ribonucleoside triphosphates as substrates. The polypeptide is DNA-directed RNA polymerase subunit beta' (Oryza nivara (Indian wild rice)).